The primary structure comprises 146 residues: Hut operon positive regulatory protein (146 aa).

The protein belongs to the HutP family. As to quaternary structure, homohexamer.

Antiterminator that binds to cis-acting regulatory sequences on the mRNA in the presence of histidine, thereby suppressing transcription termination and activating the hut operon for histidine utilization. The chain is Hut operon positive regulatory protein from Bacillus mycoides (strain KBAB4) (Bacillus weihenstephanensis).